We begin with the raw amino-acid sequence, 307 residues long: Elongation factor Ts (307 aa).

The segment at 80-83 (TDFV) is involved in Mg(2+) ion dislocation from EF-Tu.

It belongs to the EF-Ts family.

It localises to the cytoplasm. Its function is as follows. Associates with the EF-Tu.GDP complex and induces the exchange of GDP to GTP. It remains bound to the aminoacyl-tRNA.EF-Tu.GTP complex up to the GTP hydrolysis stage on the ribosome. In Clostridium botulinum (strain Kyoto / Type A2), this protein is Elongation factor Ts.